The following is a 425-amino-acid chain: Glutamate-1-semialdehyde 2,1-aminomutase (425 aa).

K266 is modified (N6-(pyridoxal phosphate)lysine).

It belongs to the class-III pyridoxal-phosphate-dependent aminotransferase family. HemL subfamily. Homodimer. Pyridoxal 5'-phosphate is required as a cofactor.

Its subcellular location is the cytoplasm. The catalysed reaction is (S)-4-amino-5-oxopentanoate = 5-aminolevulinate. It functions in the pathway porphyrin-containing compound metabolism; protoporphyrin-IX biosynthesis; 5-aminolevulinate from L-glutamyl-tRNA(Glu): step 2/2. The chain is Glutamate-1-semialdehyde 2,1-aminomutase from Nitratidesulfovibrio vulgaris (strain DSM 19637 / Miyazaki F) (Desulfovibrio vulgaris).